The sequence spans 356 residues: tRNA-specific 2-thiouridylase MnmA 2 (356 aa).

ATP-binding positions include 8 to 15 (GMSGGVDS) and M34. C103 serves as the catalytic Nucleophile. An intrachain disulfide couples C103 to C199. G127 lines the ATP pocket. The interval 149-151 (KDQ) is interaction with tRNA. Catalysis depends on C199, which acts as the Cysteine persulfide intermediate. The interval 305-306 (RY) is interaction with tRNA.

It belongs to the MnmA/TRMU family.

It is found in the cytoplasm. It carries out the reaction S-sulfanyl-L-cysteinyl-[protein] + uridine(34) in tRNA + AH2 + ATP = 2-thiouridine(34) in tRNA + L-cysteinyl-[protein] + A + AMP + diphosphate + H(+). Functionally, catalyzes the 2-thiolation of uridine at the wobble position (U34) of tRNA, leading to the formation of s(2)U34. The chain is tRNA-specific 2-thiouridylase MnmA 2 from Clostridium botulinum (strain Okra / Type B1).